The primary structure comprises 149 residues: D-aminoacyl-tRNA deacylase (149 aa).

The Gly-cisPro motif, important for rejection of L-amino acids motif lies at 137–138 (GP).

The protein belongs to the DTD family. As to quaternary structure, homodimer.

It is found in the cytoplasm. It catalyses the reaction glycyl-tRNA(Ala) + H2O = tRNA(Ala) + glycine + H(+). The enzyme catalyses a D-aminoacyl-tRNA + H2O = a tRNA + a D-alpha-amino acid + H(+). Functionally, an aminoacyl-tRNA editing enzyme that deacylates mischarged D-aminoacyl-tRNAs. Also deacylates mischarged glycyl-tRNA(Ala), protecting cells against glycine mischarging by AlaRS. Acts via tRNA-based rather than protein-based catalysis; rejects L-amino acids rather than detecting D-amino acids in the active site. By recycling D-aminoacyl-tRNA to D-amino acids and free tRNA molecules, this enzyme counteracts the toxicity associated with the formation of D-aminoacyl-tRNA entities in vivo and helps enforce protein L-homochirality. The sequence is that of D-aminoacyl-tRNA deacylase from Halothermothrix orenii (strain H 168 / OCM 544 / DSM 9562).